Consider the following 31-residue polypeptide: U2-theraphotoxin-Hhn1a (31 aa).

Disulfide bonds link cysteine 2-cysteine 14, cysteine 7-cysteine 19, and cysteine 13-cysteine 26.

In terms of tissue distribution, expressed by the venom gland.

It is found in the secreted. Agglutinates erythrocytes. The sequence is that of U2-theraphotoxin-Hhn1a from Cyriopagopus hainanus (Chinese bird spider).